Here is a 1040-residue protein sequence, read N- to C-terminus: Multidrug resistance protein MdtB (1040 aa).

12 helical membrane-spanning segments follow: residues 25–45, 347–367, 369–389, 396–416, 440–460, 472–492, 537–557, 863–883, 888–908, 910–930, 968–988, and 998–1018; these read LLMA…PVAA, LMLA…NIPA, IIPG…MVFL, LTLM…IVVI, IGFT…PLLF, FAVT…TLTP, WLTL…WIVI, LGST…VLGV, FIHP…ALLA, IIAG…LIGI, ILMT…STGV, and IAMV…TPVI.

This sequence belongs to the resistance-nodulation-cell division (RND) (TC 2.A.6) family. MdtB subfamily. In terms of assembly, part of a tripartite efflux system composed of MdtA, MdtB and MdtC. MdtB forms a heteromultimer with MdtC.

It is found in the cell inner membrane. The protein is Multidrug resistance protein MdtB of Salmonella newport (strain SL254).